The primary structure comprises 673 residues: DNA ligase (673 aa).

Residues 33-37 (DYEYD), 82-83 (SL), and glutamate 113 each bind NAD(+). Lysine 115 (N6-AMP-lysine intermediate) is an active-site residue. NAD(+)-binding residues include arginine 136, glutamate 170, lysine 285, and lysine 309. Zn(2+)-binding residues include cysteine 403, cysteine 406, cysteine 421, and cysteine 426. The BRCT domain maps to 583 to 672 (AKSDILKGYT…SHEEVEKILM (90 aa)).

It belongs to the NAD-dependent DNA ligase family. LigA subfamily. Mg(2+) is required as a cofactor. The cofactor is Mn(2+).

The enzyme catalyses NAD(+) + (deoxyribonucleotide)n-3'-hydroxyl + 5'-phospho-(deoxyribonucleotide)m = (deoxyribonucleotide)n+m + AMP + beta-nicotinamide D-nucleotide.. In terms of biological role, DNA ligase that catalyzes the formation of phosphodiester linkages between 5'-phosphoryl and 3'-hydroxyl groups in double-stranded DNA using NAD as a coenzyme and as the energy source for the reaction. It is essential for DNA replication and repair of damaged DNA. The chain is DNA ligase from Caldicellulosiruptor saccharolyticus (strain ATCC 43494 / DSM 8903 / Tp8T 6331).